The sequence spans 346 residues: Biotin synthase (346 aa).

The Radical SAM core domain occupies 38–256 (KQIQVSTLLS…IAVARIMMPT (219 aa)). [4Fe-4S] cluster contacts are provided by Cys53, Cys57, and Cys60. [2Fe-2S] cluster-binding residues include Cys97, Cys128, Cys188, and Arg260.

Belongs to the radical SAM superfamily. Biotin synthase family. As to quaternary structure, homodimer. Requires [4Fe-4S] cluster as cofactor. [2Fe-2S] cluster is required as a cofactor.

The catalysed reaction is (4R,5S)-dethiobiotin + (sulfur carrier)-SH + 2 reduced [2Fe-2S]-[ferredoxin] + 2 S-adenosyl-L-methionine = (sulfur carrier)-H + biotin + 2 5'-deoxyadenosine + 2 L-methionine + 2 oxidized [2Fe-2S]-[ferredoxin]. The protein operates within cofactor biosynthesis; biotin biosynthesis; biotin from 7,8-diaminononanoate: step 2/2. Catalyzes the conversion of dethiobiotin (DTB) to biotin by the insertion of a sulfur atom into dethiobiotin via a radical-based mechanism. The sequence is that of Biotin synthase from Salmonella arizonae (strain ATCC BAA-731 / CDC346-86 / RSK2980).